The chain runs to 348 residues: Protein pelota homolog (348 aa).

Belongs to the eukaryotic release factor 1 family. Pelota subfamily. In terms of assembly, monomer. A divalent metal cation is required as a cofactor.

The protein localises to the cytoplasm. Its function is as follows. May function in recognizing stalled ribosomes, interact with stem-loop structures in stalled mRNA molecules, and effect endonucleolytic cleavage of the mRNA. May play a role in the release non-functional ribosomes and degradation of damaged mRNAs. Has endoribonuclease activity. The chain is Protein pelota homolog from Methanococcus maripaludis (strain C6 / ATCC BAA-1332).